The sequence spans 444 residues: 23S rRNA (uracil(1939)-C(5))-methyltransferase RlmD (444 aa).

One can recognise a TRAM domain in the interval 5–67 (RNRFDRTPFQ…RHFDEAKTVE (63 aa)). 4 residues coordinate [4Fe-4S] cluster: cysteine 80, cysteine 86, cysteine 89, and cysteine 168. S-adenosyl-L-methionine-binding residues include glutamine 276, phenylalanine 305, asparagine 310, glutamate 326, aspartate 353, and aspartate 374. Cysteine 400 (nucleophile) is an active-site residue.

This sequence belongs to the class I-like SAM-binding methyltransferase superfamily. RNA M5U methyltransferase family. RlmD subfamily.

The catalysed reaction is uridine(1939) in 23S rRNA + S-adenosyl-L-methionine = 5-methyluridine(1939) in 23S rRNA + S-adenosyl-L-homocysteine + H(+). In terms of biological role, catalyzes the formation of 5-methyl-uridine at position 1939 (m5U1939) in 23S rRNA. This chain is 23S rRNA (uracil(1939)-C(5))-methyltransferase RlmD, found in Xanthomonas oryzae pv. oryzae (strain KACC10331 / KXO85).